A 496-amino-acid polypeptide reads, in one-letter code: Cytosol aminopeptidase (496 aa).

Lysine 258 and aspartate 263 together coordinate Mn(2+). Lysine 270 is an active-site residue. Aspartate 281, aspartate 340, and glutamate 342 together coordinate Mn(2+). The active site involves arginine 344.

It belongs to the peptidase M17 family. Requires Mn(2+) as cofactor.

Its subcellular location is the cytoplasm. The catalysed reaction is Release of an N-terminal amino acid, Xaa-|-Yaa-, in which Xaa is preferably Leu, but may be other amino acids including Pro although not Arg or Lys, and Yaa may be Pro. Amino acid amides and methyl esters are also readily hydrolyzed, but rates on arylamides are exceedingly low.. The enzyme catalyses Release of an N-terminal amino acid, preferentially leucine, but not glutamic or aspartic acids.. Presumably involved in the processing and regular turnover of intracellular proteins. Catalyzes the removal of unsubstituted N-terminal amino acids from various peptides. The protein is Cytosol aminopeptidase (pepA) of Helicobacter pylori (strain ATCC 700392 / 26695) (Campylobacter pylori).